We begin with the raw amino-acid sequence, 564 residues long: 2-succinyl-5-enolpyruvyl-6-hydroxy-3-cyclohexene-1-carboxylate synthase (564 aa).

It belongs to the TPP enzyme family. MenD subfamily. As to quaternary structure, homodimer. Requires Mg(2+) as cofactor. Mn(2+) serves as cofactor. It depends on thiamine diphosphate as a cofactor.

The catalysed reaction is isochorismate + 2-oxoglutarate + H(+) = 5-enolpyruvoyl-6-hydroxy-2-succinyl-cyclohex-3-ene-1-carboxylate + CO2. Its pathway is quinol/quinone metabolism; 1,4-dihydroxy-2-naphthoate biosynthesis; 1,4-dihydroxy-2-naphthoate from chorismate: step 2/7. It participates in quinol/quinone metabolism; menaquinone biosynthesis. Catalyzes the thiamine diphosphate-dependent decarboxylation of 2-oxoglutarate and the subsequent addition of the resulting succinic semialdehyde-thiamine pyrophosphate anion to isochorismate to yield 2-succinyl-5-enolpyruvyl-6-hydroxy-3-cyclohexene-1-carboxylate (SEPHCHC). The polypeptide is 2-succinyl-5-enolpyruvyl-6-hydroxy-3-cyclohexene-1-carboxylate synthase (Vibrio vulnificus (strain CMCP6)).